The following is a 432-amino-acid chain: MGASLKKIEKSVATLELTIPKEKFEEGLDYAFKKNASKFNVPGFRKGKAPRFLVERYYGEGVLYEDAIEYVFHEAYQEALKTFNLEPVDYPDINILQIGKGKDLVLEATVAVMPEVELGEYKGIEIEKIEYDVYDGDVEYELEKLRQQNARIIPVEGRPAEQGDIAVIDFEGYIDDKPFEGGKGENYELELGSNTFVPGFEDQIISHNVGETFDVTVTFPEDYRVEELKGKTAVFKVTLKALNKKELPELDDEFAKDVSEFETLEELKQDIRKKLEEKNKREAENEMKEKAVMKVVENAKVDIPDVMVERQIDLSLRDLDYNLRLQGLDLNTYLSITGKTIQDLRKEMWEGALNRVKTQLVIDKIAKVENIEATEEELENKLKELAESYRVNLEEFKKSLTESQINGIKEDIAYYKTIDFIFNQCKIVSKEE.

The region spanning 163 to 248 (GDIAVIDFEG…LKALNKKELP (86 aa)) is the PPIase FKBP-type domain.

It belongs to the FKBP-type PPIase family. Tig subfamily.

The protein localises to the cytoplasm. It carries out the reaction [protein]-peptidylproline (omega=180) = [protein]-peptidylproline (omega=0). In terms of biological role, involved in protein export. Acts as a chaperone by maintaining the newly synthesized protein in an open conformation. Functions as a peptidyl-prolyl cis-trans isomerase. The chain is Trigger factor from Caldanaerobacter subterraneus subsp. tengcongensis (strain DSM 15242 / JCM 11007 / NBRC 100824 / MB4) (Thermoanaerobacter tengcongensis).